The following is a 337-amino-acid chain: Transaldolase (337 aa).

The Nuclear localization signal motif lies at Met1 to Arg10. Catalysis depends on Lys142, which acts as the Schiff-base intermediate with substrate. Lys219 carries the N6-acetyllysine modification. Phosphoserine occurs at positions 237 and 256. Residues Lys269, Lys286, and Lys321 each carry the N6-acetyllysine modification.

This sequence belongs to the transaldolase family. Type 1 subfamily. As to quaternary structure, homodimer. Interacts with KPNA1 and KPNA4.

It is found in the nucleus. Its subcellular location is the cytoplasm. The catalysed reaction is D-sedoheptulose 7-phosphate + D-glyceraldehyde 3-phosphate = D-erythrose 4-phosphate + beta-D-fructose 6-phosphate. It functions in the pathway carbohydrate degradation; pentose phosphate pathway; D-glyceraldehyde 3-phosphate and beta-D-fructose 6-phosphate from D-ribose 5-phosphate and D-xylulose 5-phosphate (non-oxidative stage): step 2/3. In terms of biological role, catalyzes the rate-limiting step of the non-oxidative phase in the pentose phosphate pathway. Catalyzes the reversible conversion of sedheptulose-7-phosphate and D-glyceraldehyde 3-phosphate into erythrose-4-phosphate and beta-D-fructose 6-phosphate. This is Transaldolase (TALDO1) from Sus scrofa (Pig).